A 429-amino-acid polypeptide reads, in one-letter code: CinA-like protein (429 aa).

It belongs to the CinA family.

This chain is CinA-like protein, found in Prochlorococcus marinus (strain MIT 9313).